Here is a 154-residue protein sequence, read N- to C-terminus: Iron sulfur cluster assembly protein 1, mitochondrial (154 aa).

This sequence belongs to the NifU family. In terms of assembly, component of the core Fe-S cluster (ISC) assembly machinery. [2Fe-2S] cluster serves as cofactor.

Its subcellular location is the mitochondrion matrix. Its pathway is cofactor biosynthesis; iron-sulfur cluster biosynthesis. Scaffold protein for the de novo synthesis of iron-sulfur (Fe-S) clusters within mitochondria, which is required for maturation of both mitochondrial and cytoplasmic [2Fe-2S] and [4Fe-4S] proteins. First, a [2Fe-2S] cluster is transiently assembled on the scaffold protein ISU1. In a second step, the cluster is released from ISU1, transferred to a glutaredoxin, followed by the formation of mitochondrial [2Fe-2S] proteins, the synthesis of [4Fe-4S] clusters and their target-specific insertion into the recipient apoproteins. Cluster assembly on ISU1 depends on the function of the cysteine desulfurase complex NFS1-ISD11, which serves as the sulfur donor for cluster synthesis, the iron-binding protein frataxin as the putative iron donor, and the electron transfer chain comprised of ferredoxin reductase and ferredoxin, which receive their electrons from NADH. The sequence is that of Iron sulfur cluster assembly protein 1, mitochondrial (ISU1) from Eremothecium gossypii (strain ATCC 10895 / CBS 109.51 / FGSC 9923 / NRRL Y-1056) (Yeast).